Here is a 433-residue protein sequence, read N- to C-terminus: C2H2 type master regulator of conidiophore development brlA (433 aa).

2 disordered regions span residues 23–54 (PSECPSMTSSFSPLDSPTPTPTSLYSQGSMAS) and 238–268 (TFKSHTPSTPHRSVSMGTPSGSDTPVSRMSG). Residues 30–48 (TSSFSPLDSPTPTPTSLYS) are compositionally biased toward low complexity. Polar residues predominate over residues 238–264 (TFKSHTPSTPHRSVSMGTPSGSDTPVS). 2 consecutive C2H2-type zinc fingers follow at residues 321 to 345 (FKCKEPGCKGRFKRQEHLKRHMKSH) and 351 to 376 (HVCWVPGCHRAFSRSDNLNAHYTKTH). The interval 391–423 (ETSQDFDPDFRGQLTPDGRPIYGSKLEDSMPDC) is disordered.

The protein localises to the nucleus. Its function is as follows. BrlA, abaA and wetA are pivotal regulators of conidiophore development and conidium maturation. They act individually and together to regulate their own expression and that of numerous other sporulation-specific genes. Binds promoters of target genes at brlA response elements (BREs) containing the conserved sequence 5'-(C/A)(A/G)AGGG(G/A)-3'. The sequence is that of C2H2 type master regulator of conidiophore development brlA from Penicillium camemberti (strain FM 013).